The following is a 362-amino-acid chain: Phosphoserine aminotransferase (362 aa).

Residue Arg43 coordinates L-glutamate. Pyridoxal 5'-phosphate contacts are provided by residues 77–78 (AS), Trp103, Thr153, Asp173, and Gln196. An N6-(pyridoxal phosphate)lysine modification is found at Lys197. 238 to 239 (NT) lines the pyridoxal 5'-phosphate pocket.

The protein belongs to the class-V pyridoxal-phosphate-dependent aminotransferase family. SerC subfamily. As to quaternary structure, homodimer. Pyridoxal 5'-phosphate serves as cofactor.

Its subcellular location is the cytoplasm. It catalyses the reaction O-phospho-L-serine + 2-oxoglutarate = 3-phosphooxypyruvate + L-glutamate. The enzyme catalyses 4-(phosphooxy)-L-threonine + 2-oxoglutarate = (R)-3-hydroxy-2-oxo-4-phosphooxybutanoate + L-glutamate. It participates in amino-acid biosynthesis; L-serine biosynthesis; L-serine from 3-phospho-D-glycerate: step 2/3. It functions in the pathway cofactor biosynthesis; pyridoxine 5'-phosphate biosynthesis; pyridoxine 5'-phosphate from D-erythrose 4-phosphate: step 3/5. Its function is as follows. Catalyzes the reversible conversion of 3-phosphohydroxypyruvate to phosphoserine and of 3-hydroxy-2-oxo-4-phosphonooxybutanoate to phosphohydroxythreonine. This Niallia circulans (Bacillus circulans) protein is Phosphoserine aminotransferase (serC).